We begin with the raw amino-acid sequence, 176 residues long: NADH-quinone oxidoreductase subunit B 1 (176 aa).

Residues Cys-55, Cys-56, Cys-120, and Cys-150 each contribute to the [4Fe-4S] cluster site.

Belongs to the complex I 20 kDa subunit family. In terms of assembly, NDH-1 is composed of 14 different subunits. Subunits NuoB, C, D, E, F, and G constitute the peripheral sector of the complex. It depends on [4Fe-4S] cluster as a cofactor.

The protein localises to the cell inner membrane. The enzyme catalyses a quinone + NADH + 5 H(+)(in) = a quinol + NAD(+) + 4 H(+)(out). In terms of biological role, NDH-1 shuttles electrons from NADH, via FMN and iron-sulfur (Fe-S) centers, to quinones in the respiratory chain. Couples the redox reaction to proton translocation (for every two electrons transferred, four hydrogen ions are translocated across the cytoplasmic membrane), and thus conserves the redox energy in a proton gradient. The protein is NADH-quinone oxidoreductase subunit B 1 of Cereibacter sphaeroides (strain ATCC 17029 / ATH 2.4.9) (Rhodobacter sphaeroides).